We begin with the raw amino-acid sequence, 379 residues long: Queuine tRNA-ribosyltransferase (379 aa).

Aspartate 94 acts as the Proton acceptor in catalysis. Substrate contacts are provided by residues 94–98, aspartate 148, glutamine 191, and glycine 218; that span reads DSGGF. The RNA binding stretch occupies residues 249–255; the sequence is GVGSPDA. Aspartate 268 serves as the catalytic Nucleophile. An RNA binding; important for wobble base 34 recognition region spans residues 273–277; it reads TRIAR. Zn(2+) is bound by residues cysteine 306, cysteine 308, cysteine 311, and histidine 337.

It belongs to the queuine tRNA-ribosyltransferase family. In terms of assembly, homodimer. Within each dimer, one monomer is responsible for RNA recognition and catalysis, while the other monomer binds to the replacement base PreQ1. It depends on Zn(2+) as a cofactor.

It carries out the reaction 7-aminomethyl-7-carbaguanine + guanosine(34) in tRNA = 7-aminomethyl-7-carbaguanosine(34) in tRNA + guanine. The protein operates within tRNA modification; tRNA-queuosine biosynthesis. Functionally, catalyzes the base-exchange of a guanine (G) residue with the queuine precursor 7-aminomethyl-7-deazaguanine (PreQ1) at position 34 (anticodon wobble position) in tRNAs with GU(N) anticodons (tRNA-Asp, -Asn, -His and -Tyr). Catalysis occurs through a double-displacement mechanism. The nucleophile active site attacks the C1' of nucleotide 34 to detach the guanine base from the RNA, forming a covalent enzyme-RNA intermediate. The proton acceptor active site deprotonates the incoming PreQ1, allowing a nucleophilic attack on the C1' of the ribose to form the product. After dissociation, two additional enzymatic reactions on the tRNA convert PreQ1 to queuine (Q), resulting in the hypermodified nucleoside queuosine (7-(((4,5-cis-dihydroxy-2-cyclopenten-1-yl)amino)methyl)-7-deazaguanosine). The protein is Queuine tRNA-ribosyltransferase of Staphylococcus aureus (strain Mu3 / ATCC 700698).